Here is a 207-residue protein sequence, read N- to C-terminus: Ras-related protein Rab-8A (207 aa).

GTP contacts are provided by Ser-17, Gly-18, Val-19, Gly-20, Lys-21, Thr-22, Cys-23, Ser-35, Ser-39, and Thr-40. Thr-22 is a binding site for Mg(2+). 2 short sequence motifs (switch) span residues 31-45 (DAFN…GIDF) and 63-80 (DTAG…YYRG). Mg(2+) contacts are provided by Thr-40 and Asp-63. Gly-66 is a binding site for GTP. At Thr-72 the chain carries Phosphothreonine. Residues Asn-121, Lys-122, Asp-124, Ala-152, and Lys-153 each coordinate GTP. Phosphoserine is present on residues Ser-181 and Ser-185. Position 204 is a cysteine methyl ester (Cys-204). The S-geranylgeranyl cysteine moiety is linked to residue Cys-204. The propeptide at 205–207 (VLL) is removed in mature form.

The protein belongs to the small GTPase superfamily. Rab family. As to quaternary structure, interacts (GTP-bound form) with MICALL1; regulates RAB8A association with recycling endosomes. Interacts with MICALL2; competes with RAB13 and is involved in E-cadherin endocytic recycling. Interacts (GTP-bound form) with MICAL1, MICALCL, MICAL3, EHBP1 and EHBP1L1; at least in case of MICAL1, MICALCL, MICAL3 and EHBP1L1 two molecules of RAB8A can bind to one molecule of the effector protein; ternary complexes of RAB8A, RAB13 and either MICAL1 or EHBP1L1 are possible. Interacts with EHD1. Interacts with MAP4K2 and SYTL4. Interacts with SGSM1 and SGSM3. Interacts with RABIF, RIMS2, RPH3A and RPH3A. Interacts with OPTN. Interacts with RAB3IP, RAB3IP functions as guanine exchange factor (GEF). Interacts with MYO5B. Interacts with CIMAP3. Interacts with BIRC6/bruce. Interacts with OCRL. Interacts with AHI1. Interacts with DCDC1. Interacts with LRRK2; interaction facilitates phosphorylation of Thr-72. Interacts with RAB31P, GDI1, GDI2, CHM, CHML, RABGGTA, RABGGTB, TBC1D15 and INPP5B; these interactions are dependent on Thr-72 not being phosphorylated. Interacts with RILPL1 and RILPL2; these interactions are dependent on the phosphorylation of Thr-72 by LRRK2. Interacts with DZIP1; prevents inhibition by the GDP-dissociation inhibitor GDI2. Interacts (in GDP-bound form) with RAB3IP/Rabin8, RAB3IP functions as guanine exchange factor (GEF) towards RAB8A. Interacts (in GDP-bound form) with RPGR, RPGR functions as GEF towards RAB8A. Mg(2+) is required as a cofactor. In terms of processing, phosphorylation of Thr-72 in the switch II region by LRRK2 prevents the association of RAB regulatory proteins, including CHM, CHML and RAB GDP dissociation inhibitors GDI1 and GDI2. Phosphorylation by LRRK2 is required for localization to stressed lysosomes.

It is found in the cell membrane. The protein localises to the golgi apparatus. Its subcellular location is the endosome membrane. It localises to the recycling endosome membrane. The protein resides in the cell projection. It is found in the cilium. The protein localises to the cytoplasmic vesicle. Its subcellular location is the phagosome membrane. It localises to the cytoplasm. The protein resides in the cytoskeleton. It is found in the microtubule organizing center. The protein localises to the centrosome. Its subcellular location is the centriole. It localises to the cilium basal body. The protein resides in the midbody. It is found in the lysosome. It carries out the reaction GTP + H2O = GDP + phosphate + H(+). Its activity is regulated as follows. Regulated by guanine nucleotide exchange factors (GEFs) such as RAB3IP/Rabin8 and RPGR which promote the exchange of bound GDP for free GTP, GTPase activating proteins (GAPs) which increase the GTP hydrolysis activity, and GDP dissociation inhibitors (GDIs) which inhibit the dissociation of the nucleotide from the GTPase. Activated in response to insulin. The small GTPases Rab are key regulators of intracellular membrane trafficking, from the formation of transport vesicles to their fusion with membranes. Rabs cycle between an inactive GDP-bound form and an active GTP-bound form that is able to recruit to membranes different sets of downstream effectors directly responsible for vesicle formation, movement, tethering and fusion. RAB8A is involved in polarized vesicular trafficking and neurotransmitter release. Together with RAB11A, RAB3IP, the exocyst complex, PARD3, PRKCI, ANXA2, CDC42 and DNMBP promotes transcytosis of PODXL to the apical membrane initiation sites (AMIS), apical surface formation and lumenogenesis. Regulates the compacted morphology of the Golgi. Together with MYO5B and RAB11A participates in epithelial cell polarization. Also involved in membrane trafficking to the cilium and ciliogenesis. Together with MICALL2, may also regulate adherens junction assembly. May play a role in insulin-induced transport to the plasma membrane of the glucose transporter GLUT4 and therefore play a role in glucose homeostasis. Involved in autophagy. Participates in the export of a subset of neosynthesized proteins through a Rab8-Rab10-Rab11-dependent endososomal export route. Targeted to and stabilized on stressed lysosomes through LRRK2 phosphorylation. Suppresses stress-induced lysosomal enlargement through EHBP1 and EHNP1L1 effector proteins. In Canis lupus familiaris (Dog), this protein is Ras-related protein Rab-8A (RAB8A).